The sequence spans 464 residues: ATP synthase subunit beta (464 aa).

150 to 157 provides a ligand contact to ATP; that stretch reads GGAGVGKT.

Belongs to the ATPase alpha/beta chains family. In terms of assembly, F-type ATPases have 2 components, CF(1) - the catalytic core - and CF(0) - the membrane proton channel. CF(1) has five subunits: alpha(3), beta(3), gamma(1), delta(1), epsilon(1). CF(0) has three main subunits: a(1), b(2) and c(9-12). The alpha and beta chains form an alternating ring which encloses part of the gamma chain. CF(1) is attached to CF(0) by a central stalk formed by the gamma and epsilon chains, while a peripheral stalk is formed by the delta and b chains.

Its subcellular location is the cell membrane. It catalyses the reaction ATP + H2O + 4 H(+)(in) = ADP + phosphate + 5 H(+)(out). Produces ATP from ADP in the presence of a proton gradient across the membrane. The catalytic sites are hosted primarily by the beta subunits. The sequence is that of ATP synthase subunit beta from Dehalococcoides mccartyi (strain ATCC BAA-2100 / JCM 16839 / KCTC 5957 / BAV1).